Reading from the N-terminus, the 715-residue chain is Eosinophil peroxidase (715 aa).

The first 17 residues, 1–17 (MHLLPALAGVLATLVLA), serve as a signal peptide directing secretion. The propeptide occupies 18-139 (QPCEGTDPAS…SGCALRDQAE (122 aa)). Asn52 and Asn113 each carry an N-linked (GlcNAc...) asparagine glycan. A disulfide bridge connects residues Cys141 and Cys152. Asp232 contacts heme b. The Proton acceptor role is filled by His233. Asp234 lines the Ca(2+) pocket. Cystine bridges form between Cys253/Cys263 and Cys257/Cys281. 4 residues coordinate Ca(2+): Thr306, Phe308, Asp310, and Ser312. N-linked (GlcNAc...) asparagine glycans are attached at residues Asn327 and Asn363. Cysteines 359 and 370 form a disulfide. Heme b contacts are provided by Glu380 and His474. Tyr488 bears the 3'-nitrotyrosine mark. 2 disulfides stabilise this stretch: Cys578–Cys635 and Cys676–Cys701. N-linked (GlcNAc...) asparagine glycosylation is found at Asn700 and Asn708.

Belongs to the peroxidase family. XPO subfamily. Tetramer of two light chains and two heavy chains. The cofactor is Ca(2+). Heme b serves as cofactor.

The protein localises to the cytoplasmic granule. It carries out the reaction 2 a phenolic donor + H2O2 = 2 a phenolic radical donor + 2 H2O. Functionally, mediates tyrosine nitration of secondary granule proteins in mature resting eosinophils. Shows significant inhibitory activity towards Mycobacterium tuberculosis H37Rv by inducing bacterial fragmentation and lysis. In Homo sapiens (Human), this protein is Eosinophil peroxidase (EPX).